A 393-amino-acid chain; its full sequence is Fasciculation and elongation protein zeta-1 (393 aa).

Positions 1 to 41 are disordered; the sequence is MEAPLVSLDEEFEDIRPCCTEDPEEKPQSLYGTSPHHLEDP. Ser58 is subject to Phosphoserine. The disordered stretch occupies residues 130-154; it reads NGNSSDTEIHEKEEEDEFIEKSEND. Positions 231–299 form a coiled coil; sequence SELTELLDQV…KKRRKEKGLS (69 aa). Phosphoserine occurs at positions 299 and 317.

The protein belongs to the zygin family. As to quaternary structure, homodimer. Interacts with UBE4B and SAP30L. Interacts with SCOC and ULK1; SCOC interferes with ULK1-binding to FEZ1. Directly interacts with SCOC and UVRAG. Stabilizes the interaction between SCOC and UVRAG during amino acid starvation. Interacts with the NH2-terminal variable region (V1) of PKC zeta and weakly with that of PKC epsilon. Post-translationally, phosphorylated by protein kinase C zeta; which enhances interaction with UBE4B and polyubiquitination. In terms of processing, polyubiquitinated in a UBE4B-dependent manner; which does not lead to proteasomal degradation and may be important for neurogenic activity. Polyubiquitin linkage seems to be mainly through Lys-26. In terms of tissue distribution, brain.

Its subcellular location is the cytoplasm. The protein resides in the cytoskeleton. It is found in the microtubule organizing center. The protein localises to the centrosome. It localises to the cell membrane. May be involved in axonal outgrowth as component of the network of molecules that regulate cellular morphology and axon guidance machinery. May participate in the transport of mitochondria and other cargos along microtubules. This is Fasciculation and elongation protein zeta-1 (Fez1) from Rattus norvegicus (Rat).